Consider the following 888-residue polypeptide: C2H2 zinc finger transcription factor sltA (888 aa).

3 disordered regions span residues 1–78 (MSTS…QRSP), 132–176 (IDSQ…SSEN), and 388–407 (RSSMPSNREPAQNGAKASAP). Composition is skewed to polar residues over residues 23-32 (PSLSASTSIE), 167-176 (GLGTSLSSEN), and 388-397 (RSSMPSNREP). C2H2-type zinc fingers lie at residues 500–522 (QKCKDCDKVFKRPCDLTKHEKTH) and 561–586 (YKCKFAPCTYSSKRESNCKQHMEKAH). The interval 589 to 663 (DYVRSKHNGR…PTQTGSGDFP (75 aa)) is disordered. Positions 602–632 (KASNGATPQTPSIATPSSKAQGITTPLTGSE) are enriched in polar residues.

It localises to the nucleus. Functionally, transcription factor that contributes to azole resistance by coregulating the expression of the drug target erg11A and the drug efflux pump mdr1. Binds to the 5'-AGGCA-3' motif in the promoters of ergosterol biosynthesis and drug pump genes to regulate their expression. Is able to interact with the promoters of sltA, sltB, erg11A, erg13A, erg24A, mdr1, abcE and mfsC. Involved in antifungal drug resistance to azoles, terbinafine, and simvastatin but not amphotericin B or caspofungin. This Aspergillus fumigatus (strain CBS 144.89 / FGSC A1163 / CEA10) (Neosartorya fumigata) protein is C2H2 zinc finger transcription factor sltA.